We begin with the raw amino-acid sequence, 244 residues long: 7-cyano-7-deazaguanine synthase (244 aa).

Position 14-24 (14-24 (FSGGQDSATCV)) interacts with ATP. Zn(2+) contacts are provided by cysteine 202, cysteine 217, cysteine 220, and cysteine 223.

The protein belongs to the QueC family. Zn(2+) is required as a cofactor.

It carries out the reaction 7-carboxy-7-deazaguanine + NH4(+) + ATP = 7-cyano-7-deazaguanine + ADP + phosphate + H2O + H(+). Its pathway is purine metabolism; 7-cyano-7-deazaguanine biosynthesis. Catalyzes the ATP-dependent conversion of 7-carboxy-7-deazaguanine (CDG) to 7-cyano-7-deazaguanine (preQ(0)). In Burkholderia lata (strain ATCC 17760 / DSM 23089 / LMG 22485 / NCIMB 9086 / R18194 / 383), this protein is 7-cyano-7-deazaguanine synthase.